Consider the following 509-residue polypeptide: Kynureninase 1 (509 aa).

Residues Leu169, Thr170, Phe197–Asp200, Asp283, His286, and Tyr308 contribute to the pyridoxal 5'-phosphate site. Position 309 is an N6-(pyridoxal phosphate)lysine (Lys309). 2 residues coordinate pyridoxal 5'-phosphate: Trp349 and Asn377.

Belongs to the kynureninase family. Homodimer. Requires pyridoxal 5'-phosphate as cofactor.

Its subcellular location is the cytoplasm. It carries out the reaction L-kynurenine + H2O = anthranilate + L-alanine + H(+). The catalysed reaction is 3-hydroxy-L-kynurenine + H2O = 3-hydroxyanthranilate + L-alanine + H(+). Its pathway is amino-acid degradation; L-kynurenine degradation; L-alanine and anthranilate from L-kynurenine: step 1/1. It functions in the pathway cofactor biosynthesis; NAD(+) biosynthesis; quinolinate from L-kynurenine: step 2/3. Catalyzes the cleavage of L-kynurenine (L-Kyn) and L-3-hydroxykynurenine (L-3OHKyn) into anthranilic acid (AA) and 3-hydroxyanthranilic acid (3-OHAA), respectively. The protein is Kynureninase 1 (bna5-1) of Aspergillus fumigatus (strain CBS 144.89 / FGSC A1163 / CEA10) (Neosartorya fumigata).